The following is a 291-amino-acid chain: Pyridoxal 5'-phosphate synthase subunit PdxS (291 aa).

Residue aspartate 23 coordinates D-ribose 5-phosphate. Catalysis depends on lysine 80, which acts as the Schiff-base intermediate with D-ribose 5-phosphate. Glycine 152 provides a ligand contact to D-ribose 5-phosphate. Arginine 164 is a D-glyceraldehyde 3-phosphate binding site. D-ribose 5-phosphate is bound by residues glycine 213 and 234 to 235 (GS).

It belongs to the PdxS/SNZ family. In the presence of PdxT, forms a dodecamer of heterodimers.

It catalyses the reaction aldehydo-D-ribose 5-phosphate + D-glyceraldehyde 3-phosphate + L-glutamine = pyridoxal 5'-phosphate + L-glutamate + phosphate + 3 H2O + H(+). It participates in cofactor biosynthesis; pyridoxal 5'-phosphate biosynthesis. Catalyzes the formation of pyridoxal 5'-phosphate from ribose 5-phosphate (RBP), glyceraldehyde 3-phosphate (G3P) and ammonia. The ammonia is provided by the PdxT subunit. Can also use ribulose 5-phosphate and dihydroxyacetone phosphate as substrates, resulting from enzyme-catalyzed isomerization of RBP and G3P, respectively. The sequence is that of Pyridoxal 5'-phosphate synthase subunit PdxS from Clostridium acetobutylicum (strain ATCC 824 / DSM 792 / JCM 1419 / IAM 19013 / LMG 5710 / NBRC 13948 / NRRL B-527 / VKM B-1787 / 2291 / W).